A 1476-amino-acid chain; its full sequence is Cystic fibrosis transmembrane conductance regulator (1476 aa).

The Cytoplasmic portion of the chain corresponds to 1 to 77; sequence MQKSPLEKAS…QLIHALRRCF (77 aa). Residues 78-98 form a helical membrane-spanning segment; the sequence is VWRFVFYGVLLYLGEVTKAVQ. The 285-residue stretch at 81–365 folds into the ABC transmembrane type-1 1 domain; it reads FVFYGVLLYL…TAVQIWYDSL (285 aa). Topologically, residues 99-122 are extracellular; it reads PVLLGRIIASYDPDNTEERSIAIY. The helical transmembrane segment at 123 to 146 threads the bilayer; it reads LGIGLCLLFIVRTLLLHPAIFGLH. Over 147-195 the chain is Cytoplasmic; it reads HIGMQMRIAMFSLIYKKTLKLSSRVLDKISIGQLISLLSNNLNKFDEGL. The helical transmembrane segment at 196–216 threads the bilayer; that stretch reads ALAHFIWIAPLQVVLLMGLLW. At 217–222 the chain is on the extracellular side; sequence DLLQFS. The helical transmembrane segment at 223-243 threads the bilayer; that stretch reads AFCGLGLLIVLVIFQAILGKM. The Cytoplasmic portion of the chain corresponds to 244-298; that stretch reads MVKYRDKRAAKINERLVITSEVIDNIYSVKAYCWESAMEKIIESLREEELKMTRR. A helical transmembrane segment spans residues 299 to 319; sequence SAYMRFFTSSAFFFSGFFVVF. Residues 320-339 lie on the Extracellular side of the membrane; the sequence is LSVLPYTVINGIVLRKIFTT. A helical transmembrane segment spans residues 340-358; it reads ISFCIVLRMSVTRQFPTAV. At 359–853 the chain is on the cytoplasmic side; that stretch reads QIWYDSLGMI…YLRYFTLHRG (495 aa). Residues Trp-401, 458–465, and Gln-493 contribute to the ATP site; that span reads GSTGAGKT. The ABC transporter 1 domain maps to 412–646; that stretch reads VQLNNDDRKT…RPDFSSKLMG (235 aa). Cys-524 carries S-palmitoyl cysteine lipidation. Phosphoserine is present on residues Ser-549 and Ser-660. The segment at 654–826 is disordered R region; that stretch reads TEERRSSILT…EEINEEDLKE (173 aa). Phosphoserine; by PKA is present on Ser-670. Phosphoserine occurs at positions 684, 698, and 710. Thr-715 is subject to Phosphothreonine. 5 positions are modified to phosphoserine: Ser-732, Ser-763, Ser-785, Ser-790, and Ser-808. A helical transmembrane segment spans residues 854-874; it reads LFAVLIWCVLVFLVEVAASLF. The ABC transmembrane type-1 2 domain occupies 854-1153; that stretch reads LFAVLIWCVL…SSIDTDSLMR (300 aa). Residues 875 to 913 are Extracellular-facing; that stretch reads VLWLLKNNPVNGGNNGTKIANTSYVVVITSSSFYYIFYI. N-linked (GlcNAc...) asparagine glycans are attached at residues Asn-889 and Asn-895. Residues 914–934 form a discontinuously helical membrane-spanning segment; it reads YVGVADTLLALSLFRGLPLVH. Residues 935-985 are Cytoplasmic-facing; it reads TLITASKILHRKMLHSILHAPMSTFNKLKAGGILNRFSKDIAILDDFLPLT. Residues 986–1006 form a helical membrane-spanning segment; the sequence is IFDFIQLLFIVVGAIIVVSAL. Residues 1007–1008 lie on the Extracellular side of the membrane; that stretch reads QP. Residues 1009–1029 form a helical membrane-spanning segment; sequence YIFLATVPGLAVFILLRAYFL. The Cytoplasmic portion of the chain corresponds to 1030–1090; that stretch reads HTSQQLKQLE…TANWFMYLAT (61 aa). A helical membrane pass occupies residues 1091-1111; sequence LRWFQMRIDMIFVLFFIVVTF. Residues 1112-1125 are Extracellular-facing; sequence ISILTTGEGEGTTG. The helical transmembrane segment at 1126 to 1146 threads the bilayer; sequence IILTLAMNIMSTLQWAVNSSI. Residues 1147 to 1476 lie on the Cytoplasmic side of the membrane; that stretch reads DTDSLMRSVS…TEEEVQETRL (330 aa). One can recognise an ABC transporter 2 domain in the interval 1208-1439; it reads VKDLTVKYVD…KSVFQRALSS (232 aa). Residues Tyr-1215 and 1240–1247 each bind ATP; that span reads GRTGSGKS. An interaction with GORASP2 region spans residues 1382 to 1476; sequence RVLRQAFAGC…TEEEVQETRL (95 aa). A lipid anchor (S-palmitoyl cysteine) is attached at Cys-1391. 2 positions are modified to phosphoserine: Ser-1440 and Ser-1452. Residues 1445-1456 show a composition bias toward basic residues; sequence LFHGRHSSKQKP. The tract at residues 1445-1476 is disordered; sequence LFHGRHSSKQKPRTQITAVKEETEEEVQETRL. The span at 1466–1476 shows a compositional bias: acidic residues; the sequence is ETEEEVQETRL. The short motif at 1474–1476 is the PDZ-binding element; the sequence is TRL.

This sequence belongs to the ABC transporter superfamily. ABCC family. CFTR transporter (TC 3.A.1.202) subfamily. As to quaternary structure, monomer; does not require oligomerization for channel activity. May form oligomers in the membrane. Interacts with SLC4A7 through NHERF1. Interacts with SHANK2. Interacts with NHERF1 and MYO6. Interacts (via C-terminus) with GOPC (via PDZ domain); this promotes CFTR internalization and thereby decreases channel activity. Interacts with SLC4A7 through NHERF1. Found in a complex with MYO5B and RAB11A. Interacts with ANO1. Interacts with SLC26A8. Interacts with AHCYL1; the interaction increases CFTR activity. Interacts with CSE1L. The core-glycosylated form interacts with GORASP2 (via PDZ GRASP-type 1 domain) in respone to ER stress. Interacts with MARCHF2; the interaction leads to CFTR ubiqtuitination and degradation. Interacts with ADGRG2. In terms of processing, N-glycosylated. Phosphorylated; cAMP treatment promotes phosphorylation and activates the channel. Dephosphorylation decreases the ATPase activity (in vitro). Phosphorylation at PKA sites activates the channel. Phosphorylation at PKC sites enhances the response to phosphorylation by PKA. Phosphorylated by AMPK; this inhibits channel activity. Post-translationally, ubiquitinated, leading to its degradation in the lysosome. Deubiquitination by USP10 in early endosomes enhances its endocytic recycling to the cell membrane. Ubiquitinated by RNF185 during ER stress. Ubiquitinated by MARCHF2. Detected in epithelial cells in nasopharynx, submandibular gland, pancreas and ileum (at protein level). Expressed in the epididymis. In the caput section of the epididymis, expressed uniformly on both the luminal and basolateral sides of the ducts and on sperm in the caput lumen (at protein level). In the cauda, detected along the luminal border but not continuously and is also expressed on the basolateral surface. Within the caudal lumen, detected on sperm.

Its subcellular location is the apical cell membrane. The protein resides in the early endosome membrane. It is found in the cell membrane. It localises to the recycling endosome membrane. The protein localises to the endoplasmic reticulum membrane. Its subcellular location is the nucleus. The catalysed reaction is ATP + H2O + closed Cl(-) channel = ADP + phosphate + open Cl(-) channel.. It catalyses the reaction chloride(in) = chloride(out). It carries out the reaction hydrogencarbonate(in) = hydrogencarbonate(out). The enzyme catalyses ATP + H2O = ADP + phosphate + H(+). Functionally, epithelial ion channel that plays an important role in the regulation of epithelial ion and water transport and fluid homeostasis. Mediates the transport of chloride ions across the cell membrane. Possesses an intrinsic ATPase activity and utilizes ATP to gate its channel; the passive flow of anions through the channel is gated by cycles of ATP binding and hydrolysis by the ATP-binding domains. The ion channel is also permeable to HCO(3)(-); selectivity depends on the extracellular chloride concentration. Exerts its function also by modulating the activity of other ion channels and transporters. Contributes to the regulation of the pH and the ion content of the epithelial fluid layer. Modulates the activity of the epithelial sodium channel (ENaC) complex, in part by regulating the cell surface expression of the ENaC complex. May regulate bicarbonate secretion and salvage in epithelial cells by regulating the transporter SLC4A7. Can inhibit the chloride channel activity of ANO1. Plays a role in the chloride and bicarbonate homeostasis during sperm epididymal maturation and capacitation. This is Cystic fibrosis transmembrane conductance regulator from Rattus norvegicus (Rat).